Consider the following 409-residue polypeptide: Probable beta-1,3-galactosyltransferase 3 (409 aa).

Residues 20–42 form a helical; Signal-anchor for type II membrane protein membrane-spanning segment; sequence WTFLLCFGSFCFGILFTDRMWII.

The protein belongs to the glycosyltransferase 31 family. It depends on Mn(2+) as a cofactor.

It localises to the golgi apparatus membrane. It participates in protein modification; protein glycosylation. Its function is as follows. Beta-1,3-galactosyltransferase that transfers galactose from UDP-galactose to substrates with a terminal glycosyl residue. The sequence is that of Probable beta-1,3-galactosyltransferase 3 (B3GALT3) from Arabidopsis thaliana (Mouse-ear cress).